A 153-amino-acid chain; its full sequence is Interleukin-2 (153 aa).

The signal sequence occupies residues 1 to 20; sequence MYKVQLLSCIALTLALLTSS. An O-linked (GalNAc...) threonine glycan is attached at threonine 23. Cysteine 78 and cysteine 125 form a disulfide bridge. Asparagine 111 carries N-linked (GlcNAc...) asparagine glycosylation.

Belongs to the IL-2 family.

Its subcellular location is the secreted. Functionally, cytokine produced by activated CD4-positive helper T-cells and to a lesser extend activated CD8-positive T-cells and natural killer (NK) cells that plays pivotal roles in the immune response and tolerance. Binds to a receptor complex composed of either the high-affinity trimeric IL-2R (IL2RA/CD25, IL2RB/CD122 and IL2RG/CD132) or the low-affinity dimeric IL-2R (IL2RB and IL2RG). Interaction with the receptor leads to oligomerization and conformation changes in the IL-2R subunits resulting in downstream signaling starting with phosphorylation of JAK1 and JAK3. In turn, JAK1 and JAK3 phosphorylate the receptor to form a docking site leading to the phosphorylation of several substrates including STAT5. This process leads to activation of several pathways including STAT, phosphoinositide-3-kinase/PI3K and mitogen-activated protein kinase/MAPK pathways. Functions as a T-cell growth factor and can increase NK-cell cytolytic activity as well. Promotes strong proliferation of activated B-cells and subsequently immunoglobulin production. Plays a pivotal role in regulating the adaptive immune system by controlling the survival and proliferation of regulatory T-cells, which are required for the maintenance of immune tolerance. Moreover, participates in the differentiation and homeostasis of effector T-cell subsets, including Th1, Th2, Th17 as well as memory CD8-positive T-cells. The polypeptide is Interleukin-2 (IL2) (Oryctolagus cuniculus (Rabbit)).